An 83-amino-acid chain; its full sequence is Putative membrane protein insertion efficiency factor (83 aa).

The tract at residues 62–83 (KGGYDPVPPKSVKSAGNSKDSK) is disordered.

Belongs to the UPF0161 family.

Its subcellular location is the cell inner membrane. In terms of biological role, could be involved in insertion of integral membrane proteins into the membrane. The protein is Putative membrane protein insertion efficiency factor of Chlorobaculum tepidum (strain ATCC 49652 / DSM 12025 / NBRC 103806 / TLS) (Chlorobium tepidum).